The sequence spans 284 residues: uncharacterized protein (284 aa).

The segment at 236–284 is disordered; the sequence is IDITNEADSSEIIDSEPSNKDETEKPSAQETDPFDGKPVDIKDDELPFD. Basic and acidic residues-rich tracts occupy residues 252 to 262 and 269 to 284; these read PSNKDETEKPS and FDGK…LPFD.

This is an uncharacterized protein from Bacillus subtilis (strain 168).